We begin with the raw amino-acid sequence, 272 residues long: Imidazole glycerol phosphate synthase subunit HisF (272 aa).

Active-site residues include Asp-11 and Asp-130.

This sequence belongs to the HisA/HisF family. As to quaternary structure, heterodimer of HisH and HisF.

The protein localises to the cytoplasm. The enzyme catalyses 5-[(5-phospho-1-deoxy-D-ribulos-1-ylimino)methylamino]-1-(5-phospho-beta-D-ribosyl)imidazole-4-carboxamide + L-glutamine = D-erythro-1-(imidazol-4-yl)glycerol 3-phosphate + 5-amino-1-(5-phospho-beta-D-ribosyl)imidazole-4-carboxamide + L-glutamate + H(+). It participates in amino-acid biosynthesis; L-histidine biosynthesis; L-histidine from 5-phospho-alpha-D-ribose 1-diphosphate: step 5/9. In terms of biological role, IGPS catalyzes the conversion of PRFAR and glutamine to IGP, AICAR and glutamate. The HisF subunit catalyzes the cyclization activity that produces IGP and AICAR from PRFAR using the ammonia provided by the HisH subunit. The sequence is that of Imidazole glycerol phosphate synthase subunit HisF from Methanococcus maripaludis (strain DSM 14266 / JCM 13030 / NBRC 101832 / S2 / LL).